The sequence spans 117 residues: Large ribosomal subunit protein bL20 (117 aa).

Belongs to the bacterial ribosomal protein bL20 family.

Its function is as follows. Binds directly to 23S ribosomal RNA and is necessary for the in vitro assembly process of the 50S ribosomal subunit. It is not involved in the protein synthesizing functions of that subunit. In Leptospira borgpetersenii serovar Hardjo-bovis (strain JB197), this protein is Large ribosomal subunit protein bL20.